We begin with the raw amino-acid sequence, 318 residues long: Malate dehydrogenase (318 aa).

NAD(+)-binding positions include 10-15 (GGGQIG) and Asp34. 2 residues coordinate substrate: Arg83 and Arg89. NAD(+)-binding positions include Asn96 and 119 to 121 (ISN). Substrate is bound by residues Asn121 and Arg152. The Proton acceptor role is filled by His176.

Belongs to the LDH/MDH superfamily. MDH type 3 family.

The enzyme catalyses (S)-malate + NAD(+) = oxaloacetate + NADH + H(+). Catalyzes the reversible oxidation of malate to oxaloacetate. The sequence is that of Malate dehydrogenase from Geotalea daltonii (strain DSM 22248 / JCM 15807 / FRC-32) (Geobacter daltonii).